The primary structure comprises 885 residues: Chromatin assembly factor 1 subunit A-B (885 aa).

Disordered stretches follow at residues 1-24, 115-157, 176-361, and 536-605; these read MPGKEAAGDVMKSSTKSNTKKMVQ, EDSN…NEEC, LDKP…EEEK, and VDSD…QKLK. Residues 12-21 are compositionally biased toward low complexity; the sequence is KSSTKSNTKK. Composition is skewed to polar residues over residues 116–128, 134–157, and 182–193; these read DSNISTSNDSPLN, QLANGTVSPERSTTNAPLSTNEEC, and SAASCTSVSNFS. 2 stretches are compositionally biased toward low complexity: residues 211–227 and 237–254; these read VSVSSSSSPVSLSSPDV and SSPSTSTTPTGKATSNKT. Residues 251–376 adopt a coiled-coil conformation; it reads SNKTSAEKKK…KAEITRFLQK (126 aa). Basic and acidic residues predominate over residues 255–361; it reads SAEKKKTKDK…EEKRLKEEEK (107 aa). Acidic residues-rich tracts occupy residues 536–548 and 557–573; these read VDSDEEWEEEEPG and ENEDDDPKEEEDEDDDG. Residues 629–665 are necessary for homodimerization, competence for chromatin assembly; it reads CVWCDSKASEIRLLQKFSACILESPAVEEELTQDISS.

This sequence belongs to the CHAF1A family. In terms of assembly, homodimer.

The protein resides in the nucleus. Its function is as follows. Involved in chromatin assembly in DNA replication and DNA repair. This chain is Chromatin assembly factor 1 subunit A-B (chaf1a-b), found in Xenopus laevis (African clawed frog).